Here is a 1249-residue protein sequence, read N- to C-terminus: DNA repair protein REV1 (1249 aa).

The region spanning 44–131 (TASAIFSGVA…RLLSSAPYQL (88 aa)) is the BRCT domain. A disordered region spans residues 253-323 (LSLDSTQEEK…STVQGPSSTK (71 aa)). A compositionally biased stretch (basic and acidic residues) spans 259–275 (QEEKRAEKSNADFRDCT). Positions 294-319 (RTNSLSPSLHSNTKINGAHHSTVQGP) are enriched in polar residues. The interval 350-360 (FYSRSRLHHIS) is interaction with target DNA. Residues Arg-355, 421–425 (DMDCF), 508–514 (SCSYEAR), Asn-520, and Asp-568 contribute to the dCTP site. The 235-residue stretch at 417-651 (VMHVDMDCFF…QLVTNLPGVG (235 aa)) folds into the UmuC domain. Asp-421 contributes to the Mg(2+) binding site. The Mg(2+) site is built by Asp-568 and Glu-569. 2 interaction with target DNA regions span residues 651–654 (GRSM) and 707–715 (RKSVSAEIN). Basic and acidic residues predominate over residues 1035–1047 (AYDQRQRQGEDTT). Positions 1035–1109 (AYDQRQRQGE…LPGAYGSPQK (75 aa)) are disordered. The span at 1048–1057 (HQQPTSTSVP) shows a compositional bias: polar residues. The Nuclear localization signal motif lies at 1072 to 1078 (KRNKRKN). Residues 1150–1249 (FRPAAPNLAG…QTYGSTLKVT (100 aa)) are protein interaction domain; mediates interaction with DNA polymerase zeta.

Belongs to the DNA polymerase type-Y family. In terms of assembly, interacts with FAAP20. Monomer. Interacts with the DNA polymerase zeta which is composed of REV3L and MAD2L2; the interaction with MAD2L2 is direct and requires that REV3L is in its closed conformation. Interacts with POLH, POLI and POLK. Ubiquitous.

The protein localises to the nucleus. In terms of biological role, deoxycytidyl transferase involved in DNA repair. Transfers a dCMP residue from dCTP to the 3'-end of a DNA primer in a template-dependent reaction. May assist in the first step in the bypass of abasic lesions by the insertion of a nucleotide opposite the lesion. Required for normal induction of mutations by physical and chemical agents. This Mus musculus (Mouse) protein is DNA repair protein REV1 (Rev1).